Consider the following 341-residue polypeptide: Major histocompatibility complex class I-related protein 1 (341 aa).

The signal sequence occupies residues 1–22; that stretch reads MGELMAFLLPLIIVLMVKHSDS. The alpha-1 stretch occupies residues 23–109; sequence RTHSLRYFRL…KRLQRHYNHS (87 aa). Positions 23–201 are antigen-binding cleft; the sequence is RTHSLRYFRL…EYGKDTLQRT (179 aa). Residues 23–302 are Extracellular-facing; that stretch reads RTHSLRYFRL…QESETIPLVM (280 aa). 5-(2-oxoethylideneamino)-6-(D-ribitylamino)uracil is bound by residues Arg31, Ser46, and Lys65. Residues Arg31, Ser46, and Lys65 each coordinate 5-(2-oxopropylideneamino)-6-(D-ribitylamino)uracil. Residues Arg31, Ser46, and Lys65 each coordinate 7-hydroxy-6-methyl-8-(1-D-ribityl)lumazine. Arg31 is a binding site for 8-(9H-purin-6-yl)-2-oxa-8-azabicyclo[3.3.1]nona-3,6-diene-4,6-dicarbaldehyde. Residues Lys65 and His80 each contribute to the 8-(9H-purin-6-yl)-2-oxa-8-azabicyclo[3.3.1]nona-3,6-diene-4,6-dicarbaldehyde site. Lys65 provides a ligand contact to 2-amino-4-oxopteridine-6-carbaldehyde. Lys65 lines the pyridoxal pocket. N-linked (GlcNAc...) asparagine glycosylation occurs at Asn107. Residues 110-201 form an alpha-2 region; sequence GSHTYQRMIG…EYGKDTLQRT (92 aa). Arg116, Tyr174, and Gln175 together coordinate 5-(2-oxoethylideneamino)-6-(D-ribitylamino)uracil. Residues Arg116, Tyr174, and Gln175 each contribute to the 5-(2-oxopropylideneamino)-6-(D-ribitylamino)uracil site. 7-hydroxy-6-methyl-8-(1-D-ribityl)lumazine is bound by residues Arg116, Tyr174, and Gln175. Arg116 contacts 8-(9H-purin-6-yl)-2-oxa-8-azabicyclo[3.3.1]nona-3,6-diene-4,6-dicarbaldehyde. 2 disulfides stabilise this stretch: Cys120-Cys183 and Cys222-Cys278. The interval 202-293 is alpha-3; the sequence is EPPLVRVNRK…GVHMVLQVPQ (92 aa). The Ig-like C1-type domain occupies 203-299; that stretch reads PPLVRVNRKE…QVPQESETIP (97 aa). The tract at residues 294–302 is connecting peptide; the sequence is ESETIPLVM. A helical transmembrane segment spans residues 303-323; sequence KAVSGSIVLVIVLAGVGVLVW. Over 324 to 341 the chain is Cytoplasmic; it reads RRRPREQNGAIYLPTPDR.

It belongs to the MHC class I family. As to quaternary structure, heterotrimer that consists of MR1, B2M and a metabolite antigen. Major classes of metabolite ligands presented by MR1 include riboflavin-related antigens, pyrimidines and ribityl lumazines, nucleobase adducts and folate derivatives. Forms reversible covalent Schiff base complexes with microbial pyrimidine-based metabolite, which serves as a molecular switch triggering complete folding, stable association with B2M and translocation of the ternary complex from endoplasmic reticulum to the plasma membrane. Alternatively, forms non-Schiff base complexes with ribityl lumazines. On antigen-presenting cells, the ternary complex interacts with TCR on MR1-restricted T cells, predominantly represented by CD8-positive and CD4- and CD8-double negative MAIT cell subsets. Interacts with TAPBP and TAPBPL chaperones in the endoplasmic reticulum. TAPBP associated or not with MHC class I peptide loading complex binds ligand-free MR1 or MR1-B2M complex, providing for stable MR1 pools ready for metabolite antigen processing. TAPBPL interacts with MR1 in a ligand-independent way; this interaction may stabilize MR1 pool and facilitate ligand loading and dissociation. MR1-B2M heterodimer adopts a topology similar to classical MHC class I molecules, with alpha-1 and alpha-2 domains of MR1 forming the antigen-binding cleft composed of two alpha-helices resting on a floor of 7-stranded anti-parallel beta-pleated sheet. The ribityl moiety of pyrimidine-based antigens is recognized by Tyr-95 residue in the CDR3 alpha loop of the invariant TRAV1-2 TCR. In terms of assembly, homodimerizes and does not associate with B2M. In terms of processing, N-glycosylated. Ubiquitous. Low expression is detected in peripheral blood B cells, T cells, monocytes and in bronchial epithelial cells (at protein level). Expressed in plasmablasts or plasma B cells in the lamina propria of ileum, appendix and colon (at protein level). Highly expressed on a subset of CD45-positive CD3-positive thymocytes (at protein level).

Its subcellular location is the cell membrane. It localises to the endoplasmic reticulum membrane. It is found in the golgi apparatus membrane. The protein localises to the early endosome membrane. The protein resides in the late endosome membrane. Its subcellular location is the secreted. Its activity is regulated as follows. Inhibited by pterin-based metabolites such as 6-formylpterin (6-FP, a product of folic acid photodegradation). 6-FP competitively inhibits MAIT cell activation by 5-OP-RU. Modulated by commonly prescribed anti-inflammatory drug metabolites. Inhibited by salicilates such as 3-formylsalicylic and 5-formylsalicylic acids. Activated by diclofenac and/or its hydroxy metabolites. Its function is as follows. Antigen-presenting molecule specialized in displaying microbial pyrimidine-based metabolites to alpha-beta T cell receptors (TCR) on innate-type mucosal-associated invariant T (MAIT) cells. In complex with B2M preferentially presents riboflavin-derived metabolites to semi-invariant TRAV1.2 TCRs on MAIT cells, guiding immune surveillance of the microbial metabolome at mucosal epithelial barriers. Signature pyrimidine-based microbial antigens are generated via non-enzymatic condensation of metabolite intermediates of the riboflavin pathway with by-products arising from other metabolic pathways such as glycolysis. Typical potent antigenic metabolites are 5-(2-oxoethylideneamino)-6-D-ribitylaminouracil (5-OE-RU) and 5-(2-oxopropylideneamino)-6-D-ribitylaminouracil (5-OP-RU), products of condensation of 5-amino-6-D-ribityaminouracil (5-A-RU) with glyoxal or methylglyoxal by-products, respectively. May present microbial antigens to various TRAV1-2-negative MAIT cell subsets, providing for unique recognition of diverse microbes, including pathogens that do not synthesize riboflavin. Upon antigen recognition, elicits rapid innate-type MAIT cell activation to eliminate pathogenic microbes by directly killing infected cells. During T cell development, drives thymic selection and post-thymic terminal differentiation of MAIT cells in a process dependent on commensal microflora. Acts as an immune sensor of cancer cell metabolome. May present a tumor-specific or -associated metabolite essential for cancer cell survival to a 'pan-cancer' TCR consisting of TRAV38.2-DV8*TRAJ31 alpha chain paired with a TRBV25.1*TRBJ2.3 beta chain on a non-MAIT CD8-positive T cell clone (MC.7.G5), triggering T cell-mediated killing of a wide range of cancer cell types. Functionally, allele MR1*01: Presents microbial-derived metabolite 5-OP-RU to semi-invariant TRAV1.2-TRAJ33-TRBV6.1 (A-F7) TCR on MAIT cells. Presents nucleobase carbonyl adducts generated during oxidative stress. Captures M3Ade, a nucleobase adduct composed of one adenine modified by a malondialdehyde trimer, for recognition by MR1-restricted T cell clones expressing a polyclonal TCR repertoire. Displays moderate binding affinity toward tumor-enriched pyridoxal and pyridoxal 5'-phosphate antigens. Allele MR1*04: Presents tumor-enriched metabolite pyridoxal to pan-cancer 7.G5 TCR on T cells enabling preferential recognition of cancer cells. May act as an alloantigen. The protein is Major histocompatibility complex class I-related protein 1 of Homo sapiens (Human).